Consider the following 426-residue polypeptide: Enolase (426 aa).

Gln-162 is a binding site for (2R)-2-phosphoglycerate. The Proton donor role is filled by Glu-204. Residues Asp-241, Glu-288, and Asp-315 each contribute to the Mg(2+) site. Residues Lys-340, Arg-369, Ser-370, and Lys-391 each coordinate (2R)-2-phosphoglycerate. The active-site Proton acceptor is the Lys-340.

The protein belongs to the enolase family. Requires Mg(2+) as cofactor.

Its subcellular location is the cytoplasm. It localises to the secreted. It is found in the cell surface. The catalysed reaction is (2R)-2-phosphoglycerate = phosphoenolpyruvate + H2O. The protein operates within carbohydrate degradation; glycolysis; pyruvate from D-glyceraldehyde 3-phosphate: step 4/5. Its function is as follows. Catalyzes the reversible conversion of 2-phosphoglycerate (2-PG) into phosphoenolpyruvate (PEP). It is essential for the degradation of carbohydrates via glycolysis. The sequence is that of Enolase from Bacteroides thetaiotaomicron (strain ATCC 29148 / DSM 2079 / JCM 5827 / CCUG 10774 / NCTC 10582 / VPI-5482 / E50).